The chain runs to 207 residues: LexA repressor (207 aa).

Residues 28-48 (RAEIASRLGFKSANAAEEHLK) constitute a DNA-binding region (H-T-H motif). Residues Ser124 and Lys161 each act as for autocatalytic cleavage activity in the active site.

This sequence belongs to the peptidase S24 family. Homodimer.

It carries out the reaction Hydrolysis of Ala-|-Gly bond in repressor LexA.. Functionally, represses a number of genes involved in the response to DNA damage (SOS response), including recA and lexA. In the presence of single-stranded DNA, RecA interacts with LexA causing an autocatalytic cleavage which disrupts the DNA-binding part of LexA, leading to derepression of the SOS regulon and eventually DNA repair. The protein is LexA repressor of Shewanella amazonensis (strain ATCC BAA-1098 / SB2B).